Reading from the N-terminus, the 493-residue chain is Probable cytosol aminopeptidase (493 aa).

Lys-257 and Asp-262 together coordinate Mn(2+). Lys-269 is an active-site residue. Positions 281, 341, and 343 each coordinate Mn(2+). Arg-345 is a catalytic residue.

This sequence belongs to the peptidase M17 family. Mn(2+) is required as a cofactor.

It localises to the cytoplasm. It catalyses the reaction Release of an N-terminal amino acid, Xaa-|-Yaa-, in which Xaa is preferably Leu, but may be other amino acids including Pro although not Arg or Lys, and Yaa may be Pro. Amino acid amides and methyl esters are also readily hydrolyzed, but rates on arylamides are exceedingly low.. The catalysed reaction is Release of an N-terminal amino acid, preferentially leucine, but not glutamic or aspartic acids.. In terms of biological role, presumably involved in the processing and regular turnover of intracellular proteins. Catalyzes the removal of unsubstituted N-terminal amino acids from various peptides. The sequence is that of Probable cytosol aminopeptidase from Synechococcus sp. (strain WH7803).